We begin with the raw amino-acid sequence, 441 residues long: Xaa-Pro aminopeptidase (441 aa).

Mn(2+) is bound by residues D261, D272, H355, E384, and E407.

Belongs to the peptidase M24B family. Homotetramer. Mn(2+) is required as a cofactor.

The protein localises to the cytoplasm. It carries out the reaction Release of any N-terminal amino acid, including proline, that is linked to proline, even from a dipeptide or tripeptide.. In Escherichia coli (strain K12), this protein is Xaa-Pro aminopeptidase (pepP).